Consider the following 338-residue polypeptide: Anthranilate phosphoribosyltransferase (338 aa).

5-phospho-alpha-D-ribose 1-diphosphate contacts are provided by residues G78, 81–82 (GD), S86, 88–91 (NIST), 106–114 (KHGNRSITS), and S118. Residue G78 participates in anthranilate binding. S90 is a Mg(2+) binding site. N109 serves as a coordination point for anthranilate. R163 is a binding site for anthranilate. Mg(2+) contacts are provided by D222 and E223.

Belongs to the anthranilate phosphoribosyltransferase family. As to quaternary structure, homodimer. The cofactor is Mg(2+).

It catalyses the reaction N-(5-phospho-beta-D-ribosyl)anthranilate + diphosphate = 5-phospho-alpha-D-ribose 1-diphosphate + anthranilate. Its pathway is amino-acid biosynthesis; L-tryptophan biosynthesis; L-tryptophan from chorismate: step 2/5. Its function is as follows. Catalyzes the transfer of the phosphoribosyl group of 5-phosphorylribose-1-pyrophosphate (PRPP) to anthranilate to yield N-(5'-phosphoribosyl)-anthranilate (PRA). The protein is Anthranilate phosphoribosyltransferase of Staphylococcus haemolyticus (strain JCSC1435).